Reading from the N-terminus, the 301-residue chain is Mitochondrial substrate carrier family protein Z (301 aa).

Over 1-19 (MTGKEENKQQQHVNFPWKR) the chain is Mitochondrial intermembrane. 3 Solcar repeats span residues 14–101 (NFPW…FTEQ), 116–200 (QQFG…ISDY), and 210–293 (LPVW…VMGI). A helical membrane pass occupies residues 20 to 37 (LVAGAVAGTADVWACHPL). At 38 to 65 (DRIKTQLQNNPGKSIVGTFGDIVSKGKG) the chain is on the mitochondrial matrix side. The helical transmembrane segment at 66-86 (FTGGVNALYEGILPMTAEAIF) threads the bilayer. Residues 87 to 117 (KVGIRYFAFSWFTEQYKTTVYKGETLNKKQQ) lie on the Mitochondrial intermembrane side of the membrane. Residues 118–138 (FGANLLGGAFAGTIESFVVVI) form a helical membrane-spanning segment. The Mitochondrial matrix segment spans residues 139 to 174 (PCELLKVRHMTQEHNKSFGTVFRDVLREEGFQGLYK). Residues 175–191 (GGSATLLRQITNHMIRF) form a helical membrane-spanning segment. Over 192 to 212 (PTFYAISDYLKGGDHSVHLPV) the chain is Mitochondrial intermembrane. Residues 213–229 (WQNLSAGAIAGTASTLF) form a helical membrane-spanning segment. At 230-275 (NNPLDTIKTRMQKQGQNQTTMQVVRGIYQETGVKGYWAGVIPRILR) the chain is on the mitochondrial matrix side. The chain crosses the membrane as a helical span at residues 276–296 (VAPGQAITWAVVELVMGILEP). The Mitochondrial intermembrane segment spans residues 297–301 (SSKKH).

This sequence belongs to the mitochondrial carrier (TC 2.A.29) family.

It localises to the mitochondrion inner membrane. Functionally, mitochondrial solute carriers shuttle metabolites, nucleotides, and cofactors through the mitochondrial inner membrane. The protein is Mitochondrial substrate carrier family protein Z (mcfZ) of Dictyostelium discoideum (Social amoeba).